The following is a 211-amino-acid chain: MKKTLLGSLILLAFAGNVQAADNPNPETKGKVTFYGKVVENTCKVKSGNRDMSVVLNDVGKAHLSQKGYTAMPTPFTITLEGCNANTGTKPKANKVGVYFYSWNNADKENSYTLKSTLTGTDKADNVNIQIFQENGTDAIGVADKTIDDFTHKNNGSTNSDKPTKNHISSATALNNQTGDIALHYIAQYYATGMASAGKGPTSVDFPIAYG.

An N-terminal signal peptide occupies residues 1 to 20 (MKKTLLGSLILLAFAGNVQA). Cys-43 and Cys-83 are oxidised to a cystine.

It belongs to the fimbrial protein family.

Its subcellular location is the fimbrium. Its function is as follows. Mediates adherence to oropharyngeal epithelial cells. Helps the airway colonization process. The sequence is that of Major fimbrial subunit (hifA) from Haemophilus influenzae.